We begin with the raw amino-acid sequence, 386 residues long: Methionine aminopeptidase 1 (386 aa).

Alanine 2 carries the N-acetylalanine modification. The C6H2-type zinc-finger motif lies at threonine 6–lysine 59. Cysteine 9, cysteine 14, cysteine 22, cysteine 25, cysteine 36, cysteine 40, histidine 48, histidine 52, and lysine 53 together coordinate Zn(2+). Position 203 (histidine 203) interacts with a protein. Residues aspartate 220, aspartate 231, and histidine 294 each contribute to the Zn(2+) site. Histidine 301 serves as a coordination point for a protein. The Zn(2+) site is built by glutamate 327 and glutamate 358.

Belongs to the peptidase M24A family. Methionine aminopeptidase type 1 subfamily. Associates with the 60S ribosomal subunit of the 80S translational complex. The cofactor is Zn(2+). It depends on Co(2+) as a cofactor. Mn(2+) is required as a cofactor. Fe(2+) serves as cofactor.

It localises to the cytoplasm. The catalysed reaction is Release of N-terminal amino acids, preferentially methionine, from peptides and arylamides.. Cotranslationally removes the N-terminal methionine from nascent proteins. The N-terminal methionine is often cleaved when the second residue in the primary sequence is small and uncharged (Met-Ala-, Cys, Gly, Pro, Ser, Thr, or Val). The protein is Methionine aminopeptidase 1 (Metap1) of Mus musculus (Mouse).